The sequence spans 232 residues: MSIPLLKYSLSTQNQRVDGYEVSPGEEQPRAYNTDNLPSAVEMDEVIWAAYRQIFSEHQILSSTSDSNLESQLRFNQIRIKDFIRGLILSESFRKLNYDVNNNYRFVEICVQRILGRDVYNEREKLAWSVVIASKGLESFVNMLLDSDEYEENFGDSIVPYQRRRIIAQRSKGEMPFNLKTPRYGADFKEKFGMPQFIWQGPVRQFRPQEQRPKAGDPALFLGMVNDLALFK.

Residues 11–191 form the PBS-linker domain; it reads STQNQRVDGY…PRYGADFKEK (181 aa).

Belongs to the phycobilisome linker protein family. As to quaternary structure, the phycobilisome is a hemidiscoidal structure that is composed of two distinct substructures: a core complex and a number of rods radiating from the core.

The protein resides in the plastid. The protein localises to the chloroplast. It localises to the chloroplast thylakoid membrane. Functionally, rod-core linker protein required for attachment of phycocyanin to allophycocyanin in cores of phycobilisomes. Linker polypeptides determine the state of aggregation and the location of the disk-shaped phycobiliprotein units within the phycobilisome and modulate their spectroscopic properties in order to mediate a directed and optimal energy transfer. This is Phycobilisome rod-core linker polypeptide cpcG (cpcG) from Pyropia yezoensis (Susabi-nori).